The sequence spans 75 residues: UPF0270 protein PSPTO_1630 (75 aa).

Belongs to the UPF0270 family.

In Pseudomonas syringae pv. tomato (strain ATCC BAA-871 / DC3000), this protein is UPF0270 protein PSPTO_1630.